Reading from the N-terminus, the 516-residue chain is uncharacterized protein (516 aa).

Serine 21 carries the phosphoserine modification. The disordered stretch occupies residues 46–74 (DLQSSMEDSNKANGNGEETTDGAEGVLQT). Over residues 47-62 (LQSSMEDSNKANGNGE) the composition is skewed to polar residues. 6 WD repeats span residues 182–227 (TFPL…AVYP), 252–292 (YHTD…CVKS), 295–335 (YHSD…APSS), 337–377 (QVTS…KSVW), 381–421 (AHDG…PKMV), and 426–468 (LDVG…GVRK). Positions 482 to 493 (ERIVQLEDRGAG) are enriched in basic and acidic residues. The tract at residues 482 to 516 (ERIVQLEDRGAGEDSSDDDDYEDIEDDDDQDAEMS) is disordered. The segment covering 495-516 (DSSDDDDYEDIEDDDDQDAEMS) has biased composition (acidic residues). Phosphoserine is present on residues serine 496 and serine 497.

It localises to the cytoplasm. The protein resides in the nucleus. It is found in the nucleolus. This is an uncharacterized protein from Schizosaccharomyces pombe (strain 972 / ATCC 24843) (Fission yeast).